Consider the following 329-residue polypeptide: o-succinylbenzoate synthase (329 aa).

The active-site Proton donor is lysine 140. Mg(2+) is bound by residues aspartate 168, glutamate 197, and aspartate 220. Lysine 242 serves as the catalytic Proton acceptor.

The protein belongs to the mandelate racemase/muconate lactonizing enzyme family. MenC type 1 subfamily. The cofactor is a divalent metal cation.

The enzyme catalyses (1R,6R)-6-hydroxy-2-succinyl-cyclohexa-2,4-diene-1-carboxylate = 2-succinylbenzoate + H2O. It functions in the pathway quinol/quinone metabolism; 1,4-dihydroxy-2-naphthoate biosynthesis; 1,4-dihydroxy-2-naphthoate from chorismate: step 4/7. Its pathway is quinol/quinone metabolism; menaquinone biosynthesis. Its function is as follows. Converts 2-succinyl-6-hydroxy-2,4-cyclohexadiene-1-carboxylate (SHCHC) to 2-succinylbenzoate (OSB). The polypeptide is o-succinylbenzoate synthase (Haemophilus influenzae (strain ATCC 51907 / DSM 11121 / KW20 / Rd)).